The sequence spans 145 residues: MREALKQAEIAFSKNEVPVGAVIVDRENQKIISKSYNNTEEKNNALYHAEIIAINEACRIISSKNLSDYDIYVTLEPCAMCAAAIAHSRLKRLFYGASDSKHGAVESNLRYFNSKACFHRPEIYSGIFAEDSALLMKGFFKKIRD.

Residues 1-116 (MREALKQAEI…SNLRYFNSKA (116 aa)) enclose the CMP/dCMP-type deaminase domain. H48 contributes to the Zn(2+) binding site. The active-site Proton donor is the E50. Zn(2+)-binding residues include C78 and C81.

Belongs to the cytidine and deoxycytidylate deaminase family. In terms of assembly, homodimer. It depends on Zn(2+) as a cofactor.

The catalysed reaction is adenosine(34) in tRNA + H2O + H(+) = inosine(34) in tRNA + NH4(+). In terms of biological role, catalyzes the deamination of adenosine to inosine at the wobble position 34 of tRNA(Arg2). This is tRNA-specific adenosine deaminase from Rickettsia bellii (strain RML369-C).